The following is a 179-amino-acid chain: Apoptosis regulator Bcl-2 homolog (179 aa).

Residues 76–95 (ELFKDLINWGRICGFIVFSA) carry the BH1 motif. Positions 126-141 (PWMISHGGQEEFLAFS) match the BH2 motif.

It belongs to the Bcl-2 family. In terms of assembly, interacts with host BECN1 (via BH3 homology domain); this interaction allows the virus to inhibit BECN1, and thus autophagy. Interacts with host BID. Interacts with host BAX.

The protein resides in the host mitochondrion. It is found in the host endoplasmic reticulum. Suppresses apoptosis in host cell to promote the viral replication. Has the ability to potentially bind to all the members of the proapoptotic Bcl-2 family. Inhibits autophagy by interacting with host Beclin 1 (BECN1). The chain is Apoptosis regulator Bcl-2 homolog from African swine fever virus (isolate Tick/South Africa/Pretoriuskop Pr4/1996) (ASFV).